A 387-amino-acid polypeptide reads, in one-letter code: Cytochrome b (387 aa).

A run of 4 helical transmembrane segments spans residues 32 to 52 (FGSL…TLAM), 76 to 98 (WLVR…LHIG), 113 to 133 (VWAI…LGYV), and 179 to 199 (FFAL…MHLI). Residues His-82 and His-96 each contribute to the heme b site. Heme b is bound by residues His-183 and His-197. His-202 lines the a ubiquinone pocket. 4 helical membrane-spanning segments follow: residues 226–246 (YLFK…SFVF), 290–310 (LLGV…PITD), 322–342 (LSKF…KLGA), and 349–369 (FIEL…IIVP).

The protein belongs to the cytochrome b family. In terms of assembly, fungal cytochrome b-c1 complex contains 10 subunits; 3 respiratory subunits, 2 core proteins and 5 low-molecular weight proteins. Cytochrome b-c1 complex is a homodimer. It depends on heme b as a cofactor.

It localises to the mitochondrion inner membrane. Its function is as follows. Component of the ubiquinol-cytochrome c reductase complex (complex III or cytochrome b-c1 complex) that is part of the mitochondrial respiratory chain. The b-c1 complex mediates electron transfer from ubiquinol to cytochrome c. Contributes to the generation of a proton gradient across the mitochondrial membrane that is then used for ATP synthesis. The protein is Cytochrome b (COB) of Podospora anserina (strain S / ATCC MYA-4624 / DSM 980 / FGSC 10383) (Pleurage anserina).